A 304-amino-acid chain; its full sequence is Non-specific ribonucleoside hydrolase RihC (304 aa).

The active site involves His-233.

Belongs to the IUNH family. RihC subfamily.

In terms of biological role, hydrolyzes both purine and pyrimidine ribonucleosides with a broad-substrate specificity. This Escherichia coli O6:H1 (strain CFT073 / ATCC 700928 / UPEC) protein is Non-specific ribonucleoside hydrolase RihC.